A 178-amino-acid chain; its full sequence is MDNSIPIESPSLSRRQLLNFITGATVAVTAGAALYPAGKFLIAPAEKTGAGGAILAKDILGKQIPASQILAEPPQTRALVAGLAGEPTYLIVKEDHTLDRIGLVDNCTHLGCTFPWNPLDQQFQCPCHGSRYAPDGSVVRGPAPLPLKIVQVAVIDNSILISPWTETDPRTGKKPWWV.

The helical transmembrane segment at 20 to 42 (FITGATVAVTAGAALYPAGKFLI) threads the bilayer. Residues 65-161 (PASQILAEPP…VAVIDNSILI (97 aa)) form the Rieske domain. [2Fe-2S] cluster-binding residues include cysteine 107, histidine 109, cysteine 125, and histidine 128. Cysteine 112 and cysteine 127 are disulfide-bonded.

It belongs to the Rieske iron-sulfur protein family. The 4 large subunits of the cytochrome b6-f complex are cytochrome b6, subunit IV (17 kDa polypeptide, PetD), cytochrome f and the Rieske protein, while the 4 small subunits are PetG, PetL, PetM and PetN. The complex functions as a dimer. It depends on [2Fe-2S] cluster as a cofactor.

The protein localises to the cellular thylakoid membrane. It catalyses the reaction 2 oxidized [plastocyanin] + a plastoquinol + 2 H(+)(in) = 2 reduced [plastocyanin] + a plastoquinone + 4 H(+)(out). Component of the cytochrome b6-f complex, which mediates electron transfer between photosystem II (PSII) and photosystem I (PSI), cyclic electron flow around PSI, and state transitions. This chain is Cytochrome b6-f complex iron-sulfur subunit 3, found in Nostoc sp. (strain PCC 7120 / SAG 25.82 / UTEX 2576).